The following is a 440-amino-acid chain: Trigger factor (440 aa).

One can recognise a PPIase FKBP-type domain in the interval 160-253 (KDTVIGDALR…VTEVKRLELP (94 aa)).

It belongs to the FKBP-type PPIase family. Tig subfamily.

The protein localises to the cytoplasm. The catalysed reaction is [protein]-peptidylproline (omega=180) = [protein]-peptidylproline (omega=0). Functionally, involved in protein export. Acts as a chaperone by maintaining the newly synthesized protein in an open conformation. Functions as a peptidyl-prolyl cis-trans isomerase. The polypeptide is Trigger factor (Chlorobium chlorochromatii (strain CaD3)).